A 281-amino-acid chain; its full sequence is Endochitinase At2g43610 (281 aa).

The N-terminal stretch at 1 to 28 (MATQNAILKKALIIFLFTLTIMTGTAFS) is a signal peptide. In terms of domain architecture, Chitin-binding type-1 spans 29–66 (QNCGTNGCKGNMCCSRWGYCGTTKAYCGTGCQSGPCNS). Intrachain disulfides connect Cys-31/Cys-42, Cys-36/Cys-48, Cys-41/Cys-55, and Cys-59/Cys-64. Positions 86–281 (GTIASVITPA…GVTPGTNLSC (196 aa)) are catalytic. Glu-148 acts as the Proton donor in catalysis. Asn-278 is a glycosylation site (N-linked (GlcNAc...) asparagine).

It belongs to the glycosyl hydrolase 19 family. Chitinase class I subfamily.

It carries out the reaction Random endo-hydrolysis of N-acetyl-beta-D-glucosaminide (1-&gt;4)-beta-linkages in chitin and chitodextrins.. The sequence is that of Endochitinase At2g43610 from Arabidopsis thaliana (Mouse-ear cress).